A 155-amino-acid polypeptide reads, in one-letter code: MSRRSTAAGETAKSDPIYRNRLVNMLVNRLLKDGKKSLAYRILYQAMKQIKQKTQKNPLSVLRQAVRRVTPNVAVKARRVGGSTYQVPVEIIPAQGKALAIRWLLGASRKRPGRSMALKSSYELMDAAKNNGSAVRKKEETHRMAEANKAFAHFR.

Belongs to the universal ribosomal protein uS7 family. In terms of assembly, part of the 30S ribosomal subunit.

It localises to the plastid. It is found in the chloroplast. In terms of biological role, one of the primary rRNA binding proteins, it binds directly to 16S rRNA where it nucleates assembly of the head domain of the 30S subunit. This is Small ribosomal subunit protein uS7cz/uS7cy (rps7-A) from Angiopteris evecta (Mule's foot fern).